Reading from the N-terminus, the 306-residue chain is MKHLTAMNELSLEDIHELIEEARELKKGKSDSVLSGKFAANLFFEPSTRTRFSFEVAEKKLGMNVLNLDGVSTSVQKGESLYDTVKTLESIGADVCVIRHSHDHYYDELIGHVGIPVINAGDGCGQHPTQSLLDLMTIHEEWGRFAGLTVSIHGDIKHSRVARSNAEVLTRLGAKVLFSGPDEWRDEDNPYGTYVSPDEAVAHSDVVMLLRIQHERHEKKAAERDYLETFGLSLKRAELLKKDAVIMHPAPVNRGVEIDSALVESGRSRIFKQMENGVYIRMAVLKRALLNGENKKRGDQAYVLFN.

Positions 49 and 50 each coordinate carbamoyl phosphate. Lys-77 is an L-aspartate binding site. Residues Arg-99, His-127, and Gln-130 each coordinate carbamoyl phosphate. L-aspartate contacts are provided by Arg-160 and Arg-211. Carbamoyl phosphate is bound by residues Ala-250 and Pro-251.

Belongs to the aspartate/ornithine carbamoyltransferase superfamily. ATCase family. As to quaternary structure, heterododecamer (2C3:3R2) of six catalytic PyrB chains organized as two trimers (C3), and six regulatory PyrI chains organized as three dimers (R2).

The catalysed reaction is carbamoyl phosphate + L-aspartate = N-carbamoyl-L-aspartate + phosphate + H(+). It functions in the pathway pyrimidine metabolism; UMP biosynthesis via de novo pathway; (S)-dihydroorotate from bicarbonate: step 2/3. Catalyzes the condensation of carbamoyl phosphate and aspartate to form carbamoyl aspartate and inorganic phosphate, the committed step in the de novo pyrimidine nucleotide biosynthesis pathway. The sequence is that of Aspartate carbamoyltransferase catalytic subunit from Bacillus licheniformis (strain ATCC 14580 / DSM 13 / JCM 2505 / CCUG 7422 / NBRC 12200 / NCIMB 9375 / NCTC 10341 / NRRL NRS-1264 / Gibson 46).